Here is an 808-residue protein sequence, read N- to C-terminus: Envelope glycoprotein B (808 aa).

The signal sequence occupies residues 1–19 (MVPNKHLLLIILSFSTACG). Topologically, residues 20–701 (QTTPTTAVEK…TGILNFIKNP (682 aa)) are virion surface. N-linked (GlcNAc...) asparagine; by host glycosylation occurs at Asn30. 5 cysteine pairs are disulfide-bonded: Cys45/Cys498, Cys62/Cys454, Cys136/Cys201, Cys291/Cys338, and Cys520/Cys557. The tract at residues 101–107 (IFNGWTR) is involved in fusion and/or binding to host membrane. N-linked (GlcNAc...) asparagine; by host glycosylation is present at Asn158. An involved in fusion and/or binding to host membrane region spans residues 187–195 (GWLWGTYRT). Residues Asn239, Asn251, Asn285, Asn331, Asn344, Asn355, Asn361, Asn532, Asn569, Asn587, and Asn598 are each glycosylated (N-linked (GlcNAc...) asparagine; by host). Hydrophobic membrane proximal region stretches follow at residues 647 to 699 (FDNS…NFIK) and 658 to 698 (IIQD…LNFI). Residues 702–722 (LGGMFTFLLIGAVIILVILLV) form a helical membrane-spanning segment. Topologically, residues 723–808 (RRTNNMSQAP…KQISTEDKIV (86 aa)) are intravirion.

Belongs to the herpesviridae glycoprotein B family. In terms of assembly, homotrimer; disulfide-linked. Binds to heparan sulfate proteoglycans. Interacts with gH/gL heterodimer. In terms of processing, a proteolytic cleavage by host furin generates two subunits that remain linked by disulfide bonds.

It localises to the virion membrane. It is found in the host cell membrane. Its subcellular location is the host endosome membrane. The protein localises to the host Golgi apparatus membrane. In terms of biological role, envelope glycoprotein that forms spikes at the surface of virion envelope. Essential for the initial attachment to heparan sulfate moieties of the host cell surface proteoglycans. Involved in fusion of viral and cellular membranes leading to virus entry into the host cell. Following initial binding to its host receptors, membrane fusion is mediated by the fusion machinery composed at least of gB and the heterodimer gH/gL. May be involved in the fusion between the virion envelope and the outer nuclear membrane during virion egress. This is Envelope glycoprotein B from Saimiriine herpesvirus 2 (strain 11) (SaHV-2).